A 187-amino-acid chain; its full sequence is Adenine phosphoribosyltransferase (187 aa).

It belongs to the purine/pyrimidine phosphoribosyltransferase family. In terms of assembly, homodimer.

It localises to the cytoplasm. The catalysed reaction is AMP + diphosphate = 5-phospho-alpha-D-ribose 1-diphosphate + adenine. The protein operates within purine metabolism; AMP biosynthesis via salvage pathway; AMP from adenine: step 1/1. In terms of biological role, catalyzes a salvage reaction resulting in the formation of AMP, that is energically less costly than de novo synthesis. This chain is Adenine phosphoribosyltransferase, found in Burkholderia pseudomallei (strain 668).